A 571-amino-acid chain; its full sequence is WAP, Kazal, immunoglobulin, Kunitz and NTR domain-containing protein 2 (571 aa).

The signal sequence occupies residues 1–29 (MCAPGYHRFWFHWGLLLLLLLEAPLRGLA). The 54-residue stretch at 34-87 (RYSHAGICPNDMNPNLWVDAQSTCKRECETDQECETYEKCCPNVCGTKSCVAAR) folds into the WAP domain. 8 cysteine pairs are disulfide-bonded: C41/C74, C57/C78, C61/C73, C67/C83, C129/C159, C133/C152, C141/C170, and C226/C282. The region spanning 121–172 (WDGQPVCKCKDRCEKEPSFTCASDGLTYYNRCFMDAEACSKGITLSVVTCRY) is the Kazal-like domain. Residues 205–298 (PALLNHPVHQ…GVLRADFPLS (94 aa)) enclose the Ig-like C2-type domain. Residue N314 is glycosylated (N-linked (GlcNAc...) asparagine). Intrachain disulfides connect C323-C373, C332-C356, C348-C369, C381-C431, C390-C414, C406-C427, C440-C510, C443-C512, and C454-C561. BPTI/Kunitz inhibitor domains follow at residues 323-373 (CLKP…MLAC) and 381-431 (CSLP…EESC). Residues 440–561 (CRACKPRQKL…LREVMYKKTC (122 aa)) enclose the NTR domain. The N-linked (GlcNAc...) asparagine glycan is linked to N514.

Belongs to the WFIKKN family. As to quaternary structure, interacts with both mature and propeptide myostatin/MSTN. In terms of tissue distribution, widely expressed, with high expression in skeletal muscle and heart. Also expressed in brain, lung and testis. Weakly expressed in liver and kidney.

It localises to the secreted. Its function is as follows. Protease-inhibitor that contains multiple distinct protease inhibitor domains. Probably has serine protease- and metalloprotease-inhibitor activity. Inhibits the biological activity of mature myostatin, but not activin. The sequence is that of WAP, Kazal, immunoglobulin, Kunitz and NTR domain-containing protein 2 (Wfikkn2) from Mus musculus (Mouse).